A 69-amino-acid chain; its full sequence is Protein translocase subunit SecE (69 aa).

Residues 43–63 form a helical membrane-spanning segment; sequence GLGICLLGFVGFVIHVPITYL.

This sequence belongs to the SecE/SEC61-gamma family. As to quaternary structure, component of the Sec protein translocase complex. Heterotrimer consisting of SecY (alpha), SecG (beta) and SecE (gamma) subunits. The heterotrimers can form oligomers, although 1 heterotrimer is thought to be able to translocate proteins. Interacts with the ribosome. May interact with SecDF, and other proteins may be involved.

Its subcellular location is the cell membrane. Functionally, essential subunit of the Sec protein translocation channel SecYEG. Clamps together the 2 halves of SecY. May contact the channel plug during translocation. This chain is Protein translocase subunit SecE, found in Methanococcus maripaludis (strain DSM 14266 / JCM 13030 / NBRC 101832 / S2 / LL).